The sequence spans 349 residues: tRNA pseudouridine synthase D (349 aa).

Residue Phe27 coordinates substrate. Catalysis depends on Asp80, which acts as the Nucleophile. Position 129 (Asn129) interacts with substrate. A TRUD domain is found at Gly155–Leu303. Phe329 is a binding site for substrate.

Belongs to the pseudouridine synthase TruD family.

It catalyses the reaction uridine(13) in tRNA = pseudouridine(13) in tRNA. Its function is as follows. Responsible for synthesis of pseudouridine from uracil-13 in transfer RNAs. In Escherichia coli (strain SE11), this protein is tRNA pseudouridine synthase D.